A 284-amino-acid chain; its full sequence is Deoxyribonuclease-1 (284 aa).

Residues 1–22 (MRAARLMGALLALAGLLQLALS) form the signal peptide. Residue Asn-40 is glycosylated (N-linked (GlcNAc...) asparagine). Glu-100 is an active-site residue. A disulfide bond links Cys-123 and Cys-126. An N-linked (GlcNAc...) asparagine glycan is attached at Asn-128. The active site involves His-156. Cys-195 and Cys-231 are disulfide-bonded.

This sequence belongs to the DNase I family. Requires Ca(2+) as cofactor. It depends on Mg(2+) as a cofactor.

The protein localises to the secreted. It is found in the zymogen granule. The protein resides in the nucleus envelope. It carries out the reaction Endonucleolytic cleavage to 5'-phosphodinucleotide and 5'-phosphooligonucleotide end-products.. Serum endocuclease secreted into body fluids by a wide variety of exocrine and endocrine organs. Expressed by non-hematopoietic tissues and preferentially cleaves protein-free DNA. Among other functions, seems to be involved in cell death by apoptosis. Binds specifically to G-actin and blocks actin polymerization. Together with DNASE1L3, plays a key role in degrading neutrophil extracellular traps (NETs). NETs are mainly composed of DNA fibers and are released by neutrophils to bind pathogens during inflammation. Degradation of intravascular NETs by DNASE1 and DNASE1L3 is required to prevent formation of clots that obstruct blood vessels and cause organ damage following inflammation. This Sus scrofa (Pig) protein is Deoxyribonuclease-1 (DNASE1).